The chain runs to 200 residues: NADH-quinone oxidoreductase subunit B (200 aa).

[4Fe-4S] cluster contacts are provided by Cys-78, Cys-79, Cys-144, and Cys-174.

The protein belongs to the complex I 20 kDa subunit family. As to quaternary structure, NDH-1 is composed of 14 different subunits. Subunits NuoB, C, D, E, F, and G constitute the peripheral sector of the complex. Requires [4Fe-4S] cluster as cofactor.

It localises to the cell membrane. The catalysed reaction is a quinone + NADH + 5 H(+)(in) = a quinol + NAD(+) + 4 H(+)(out). Its function is as follows. NDH-1 shuttles electrons from NADH, via FMN and iron-sulfur (Fe-S) centers, to quinones in the respiratory chain. The immediate electron acceptor for the enzyme in this species is believed to be ubiquinone. Couples the redox reaction to proton translocation (for every two electrons transferred, four hydrogen ions are translocated across the cytoplasmic membrane), and thus conserves the redox energy in a proton gradient. In Dehalococcoides mccartyi (strain CBDB1), this protein is NADH-quinone oxidoreductase subunit B.